Here is a 255-residue protein sequence, read N- to C-terminus: Imidazole glycerol phosphate synthase subunit HisF (255 aa).

Active-site residues include aspartate 12 and aspartate 131.

This sequence belongs to the HisA/HisF family. As to quaternary structure, heterodimer of HisH and HisF.

It localises to the cytoplasm. The catalysed reaction is 5-[(5-phospho-1-deoxy-D-ribulos-1-ylimino)methylamino]-1-(5-phospho-beta-D-ribosyl)imidazole-4-carboxamide + L-glutamine = D-erythro-1-(imidazol-4-yl)glycerol 3-phosphate + 5-amino-1-(5-phospho-beta-D-ribosyl)imidazole-4-carboxamide + L-glutamate + H(+). The protein operates within amino-acid biosynthesis; L-histidine biosynthesis; L-histidine from 5-phospho-alpha-D-ribose 1-diphosphate: step 5/9. In terms of biological role, IGPS catalyzes the conversion of PRFAR and glutamine to IGP, AICAR and glutamate. The HisF subunit catalyzes the cyclization activity that produces IGP and AICAR from PRFAR using the ammonia provided by the HisH subunit. The protein is Imidazole glycerol phosphate synthase subunit HisF of Ignicoccus hospitalis (strain KIN4/I / DSM 18386 / JCM 14125).